A 546-amino-acid chain; its full sequence is MAKDIEYNETARRKLLEGVNKLANAVKVTLGPKGRNVVIDKKFGAPTITKDGVTVAKEIELEDPLENMGAQMVKEVSTKTNDVAGDGTTTATILAQSIINEGLKNVTAGANPMSLKKGIDKAVTAAVESIQKRAVKIENKKDIANVASISANNDNTIGNLIADAMDKVGKDGVITVEEAKSIETTLDVVEGMQFDRGYISPYMVTDAESMVATLNDPFILIYDKKISSMKDLIHILEKVAQAGKPLVIISEEVEGEALATIVVNTLRKTISCVAVKAPGFGDRRKSMLEDIAILTGGQVISEDLGMKLENTTLQMLGRANKVTVDKENTTIIEGKGQTKEIQGRIGQIKKQIEDTTSEYDREKLQERLAKLAGGVAVIHVGAATEVEMKEKKARVEDALSATRAAVEEGIVPGGGLTLLKAQEAVGSLKLDGDEATGAKIIFRALEEPIRMITSNAGLEGSVIVEHAKAKKGNEGFNALTMVWEDMIQAGVVDPAKVVRSALQNAASIGSMILTTEVTITDKPDKDAPNPMAGMGGGGMGGMGGMM.

ATP contacts are provided by residues 29–32 (TLGP), Lys-50, 86–90 (DGTTT), Gly-414, 477–479 (NAL), and Asp-493.

The protein belongs to the chaperonin (HSP60) family. Forms a cylinder of 14 subunits composed of two heptameric rings stacked back-to-back. Interacts with the co-chaperonin GroES.

The protein resides in the cytoplasm. The enzyme catalyses ATP + H2O + a folded polypeptide = ADP + phosphate + an unfolded polypeptide.. Together with its co-chaperonin GroES, plays an essential role in assisting protein folding. The GroEL-GroES system forms a nano-cage that allows encapsulation of the non-native substrate proteins and provides a physical environment optimized to promote and accelerate protein folding. The polypeptide is Chaperonin GroEL (Leptospira interrogans serogroup Icterohaemorrhagiae serovar copenhageni (strain Fiocruz L1-130)).